Consider the following 436-residue polypeptide: Histidinol dehydrogenase (436 aa).

Tyr136, Gln198, and Asn221 together coordinate NAD(+). Positions 244, 266, and 269 each coordinate substrate. Zn(2+) is bound by residues Gln266 and His269. Catalysis depends on proton acceptor residues Glu334 and His335. 4 residues coordinate substrate: His335, Asp368, Glu422, and His427. Asp368 contributes to the Zn(2+) binding site. His427 lines the Zn(2+) pocket.

Belongs to the histidinol dehydrogenase family. It depends on Zn(2+) as a cofactor.

It carries out the reaction L-histidinol + 2 NAD(+) + H2O = L-histidine + 2 NADH + 3 H(+). Its pathway is amino-acid biosynthesis; L-histidine biosynthesis; L-histidine from 5-phospho-alpha-D-ribose 1-diphosphate: step 9/9. In terms of biological role, catalyzes the sequential NAD-dependent oxidations of L-histidinol to L-histidinaldehyde and then to L-histidine. This Dehalococcoides mccartyi (strain ATCC BAA-2266 / KCTC 15142 / 195) (Dehalococcoides ethenogenes (strain 195)) protein is Histidinol dehydrogenase.